The primary structure comprises 107 residues: L-rhamnose mutarotase (107 aa).

Tyr-18 lines the substrate pocket. Catalysis depends on His-22, which acts as the Proton donor. Residues Tyr-41 and 76-77 (WW) contribute to the substrate site.

It belongs to the rhamnose mutarotase family. As to quaternary structure, homodimer.

The protein resides in the cytoplasm. It carries out the reaction alpha-L-rhamnose = beta-L-rhamnose. It functions in the pathway carbohydrate metabolism; L-rhamnose metabolism. Involved in the anomeric conversion of L-rhamnose. This chain is L-rhamnose mutarotase, found in Paraburkholderia phytofirmans (strain DSM 17436 / LMG 22146 / PsJN) (Burkholderia phytofirmans).